We begin with the raw amino-acid sequence, 338 residues long: LINE-1 retrotransposable element ORF1 protein (338 aa).

Residues 1–40 are disordered; sequence MGKKQNRKTGNSKTQSASPPPKERSSSPATEQSWMENDFD. 2 stretches are compositionally biased toward polar residues: residues 8-17 and 26-35; these read KTGNSKTQSA and SSPATEQSWM. The stretch at 49-153 forms a coiled coil; it reads RSNYSELRED…QSLQEIWDYV (105 aa). An RNA recognition motif (RRM) domain region spans residues 157–252; that stretch reads NLRLIGVPES…KGKPIRLTAD (96 aa). The interval 253–317 is C-terminal domain (CTD); it reads LSAETLQARR…TTRPALKELL (65 aa).

It belongs to the transposase 22 family. Homotrimer (via coiled coil domain). May also form larger homooligomers. May interact with DDX39A, HNRNPA1, SERBP1 and YBX1. Interacts with TEX19 and UBR2. Interacts with MOV10. Interacts with APOBEC3D; this interaction inhibits LINE-1 retrotransposition. In terms of processing, polyubiquitinated, probably by UBR2, which induces its degradation.

It localises to the nucleus. Its subcellular location is the nucleolus. The protein resides in the cytoplasm. It is found in the cytoplasmic ribonucleoprotein granule. The protein localises to the stress granule. In terms of biological role, nucleic acid-binding protein which is essential for retrotransposition of LINE-1 elements in the genome. Functions as a nucleic acid chaperone binding its own transcript and therefore preferentially mobilizing the transcript from which they are encoded. This is LINE-1 retrotransposable element ORF1 protein (L1RE1) from Homo sapiens (Human).